The sequence spans 490 residues: Betaine aldehyde dehydrogenase (490 aa).

K(+) is bound at residue aspartate 93. 150–152 (GAW) contributes to the NAD(+) binding site. Lysine 162 (charge relay system) is an active-site residue. 176-179 (KPSE) lines the NAD(+) pocket. Valine 180 contacts K(+). NAD(+) is bound at residue 230–233 (GIAS). Leucine 246 serves as a coordination point for K(+). The active-site Proton acceptor is glutamate 252. The NAD(+) site is built by glycine 254, cysteine 286, and glutamate 387. Cysteine 286 functions as the Nucleophile in the catalytic mechanism. At cysteine 286 the chain carries Cysteine sulfenic acid (-SOH). Positions 457 and 460 each coordinate K(+). Glutamate 464 functions as the Charge relay system in the catalytic mechanism.

This sequence belongs to the aldehyde dehydrogenase family. In terms of assembly, dimer of dimers. It depends on K(+) as a cofactor.

It catalyses the reaction betaine aldehyde + NAD(+) + H2O = glycine betaine + NADH + 2 H(+). It participates in amine and polyamine biosynthesis; betaine biosynthesis via choline pathway; betaine from betaine aldehyde: step 1/1. Functionally, involved in the biosynthesis of the osmoprotectant glycine betaine. Catalyzes the irreversible oxidation of betaine aldehyde to the corresponding acid. This Pectobacterium carotovorum subsp. carotovorum (strain PC1) protein is Betaine aldehyde dehydrogenase.